Reading from the N-terminus, the 274-residue chain is Kit ligand (274 aa).

A signal peptide spans 1 to 25 (MKKTQTWIITCIYLQLLLFNPLVRT). Gln26 carries the pyrrolidone carboxylic acid modification. Over 26–215 (QGICRNRVTD…SDSIEDSSLQ (190 aa)) the chain is Extracellular. Intrachain disulfides connect Cys29–Cys114 and Cys68–Cys164. 4 N-linked (GlcNAc...) asparagine glycosylation sites follow: Asn90, Asn97, Asn145, and Asn196. The chain crosses the membrane as a helical span at residues 216–238 (WAAVALPAFFSLVIGFAFGALYW). Residues 239–274 (KKKQPNLTRTVENIQINEEDNEISMLQEKEREFQEV) are Cytoplasmic-facing.

Belongs to the SCF family. In terms of assembly, homodimer, non-covalently linked. Heterotetramer with KIT, binding two KIT molecules; thereby mediates KIT dimerization and subsequent activation by autophosphorylation. In terms of processing, a soluble form is produced by proteolytic processing of the extracellular domain.

The protein resides in the cytoplasm. It localises to the cytoskeleton. Its subcellular location is the cell membrane. It is found in the cell projection. The protein localises to the lamellipodium. The protein resides in the filopodium. It localises to the secreted. Its function is as follows. Ligand for the receptor-type protein-tyrosine kinase KIT. Plays an essential role in the regulation of cell survival and proliferation, hematopoiesis, stem cell maintenance, gametogenesis, mast cell development, migration and function, and in melanogenesis. KITLG/SCF binding can activate several signaling pathways. Promotes phosphorylation of PIK3R1, the regulatory subunit of phosphatidylinositol 3-kinase, and subsequent activation of the kinase AKT1. KITLG/SCF and KIT also transmit signals via GRB2 and activation of RAS, RAF1 and the MAP kinases MAPK1/ERK2 and/or MAPK3/ERK1. KITLG/SCF and KIT promote activation of STAT family members STAT1, STAT3 and STAT5. KITLG/SCF and KIT promote activation of PLCG1, leading to the production of the cellular signaling molecules diacylglycerol and inositol 1,4,5-trisphosphate. KITLG/SCF acts synergistically with other cytokines, probably interleukins. The protein is Kit ligand (KITLG) of Sus scrofa (Pig).